The sequence spans 266 residues: Beta-lactamase OXA-19 (266 aa).

The first 20 residues, 1 to 20 (MKTFAAYVITACLSSTALAS), serve as a signal peptide directing secretion. The Acyl-ester intermediate role is filled by Ser67. Lys70 carries the N6-carboxylysine modification. 205 to 207 (KTG) provides a ligand contact to substrate.

Belongs to the class-D beta-lactamase family.

It catalyses the reaction a beta-lactam + H2O = a substituted beta-amino acid. The chain is Beta-lactamase OXA-19 (bla) from Pseudomonas aeruginosa.